A 404-amino-acid polypeptide reads, in one-letter code: Cysteine desulfurase IscS (404 aa).

Pyridoxal 5'-phosphate contacts are provided by residues 75–76 (AT), N155, Q183, and 203–205 (SGH). The residue at position 206 (K206) is an N6-(pyridoxal phosphate)lysine. Position 243 (T243) interacts with pyridoxal 5'-phosphate. The Cysteine persulfide intermediate role is filled by C328. Residue C328 participates in [2Fe-2S] cluster binding.

Belongs to the class-V pyridoxal-phosphate-dependent aminotransferase family. NifS/IscS subfamily. In terms of assembly, homodimer. Forms a heterotetramer with IscU, interacts with other sulfur acceptors. Pyridoxal 5'-phosphate is required as a cofactor.

It localises to the cytoplasm. The enzyme catalyses (sulfur carrier)-H + L-cysteine = (sulfur carrier)-SH + L-alanine. Its pathway is cofactor biosynthesis; iron-sulfur cluster biosynthesis. Functionally, master enzyme that delivers sulfur to a number of partners involved in Fe-S cluster assembly, tRNA modification or cofactor biosynthesis. Catalyzes the removal of elemental sulfur atoms from cysteine to produce alanine. Functions as a sulfur delivery protein for Fe-S cluster synthesis onto IscU, an Fe-S scaffold assembly protein, as well as other S acceptor proteins. The sequence is that of Cysteine desulfurase IscS from Shewanella oneidensis (strain ATCC 700550 / JCM 31522 / CIP 106686 / LMG 19005 / NCIMB 14063 / MR-1).